A 316-amino-acid polypeptide reads, in one-letter code: MFNLVELAVKGNPELKKRYSQGLDLAIAMSENIPDQFKLIETPTNSFLLISNVMPEDSRPWHTQIQKCLDFSNLHLPKLNKLNKICTGYDHREDTVKKLEAVPPYLVYDSEEWKLALQINKDSLIYSAIEMLADPKNWQGLYPIDPLPYIWLLFYGKKSFCASSDCIYFKKYNVPGPMLLPPHMYRPDKNISSFISHVCQYVKNLYEEVSEPINLEIVPFDNCRIKEAVEELKQIDLPVAYLSNLCLLCTLHRQNMSASRGSGDMCGYIVLGGEGEKYITTNIISKRCTVSGDCLIVPSYNISLLMQNMEINYEQQ.

This sequence belongs to the herpesviridae UL95 family.

This is Gene 34 protein (34) from Saimiriine herpesvirus 2 (strain 11) (SaHV-2).